The primary structure comprises 393 residues: Phospho-N-acetylmuramoyl-pentapeptide-transferase (393 aa).

The next 10 membrane-spanning stretches (helical) occupy residues 29-49, 75-95, 101-121, 138-158, 194-214, 226-246, 263-283, 290-310, 315-335, and 370-390; these read RAVMSAMTALLLGLVFGPWVI, TPTMGGVLILLSIAVSTLLWF, FVWVVMLVTFGFGAIGWVDDW, YLWQSLIGLVAAIYLAFSVSE, VSYPLGVFGFIFLTYFVIVGA, GLAIMPVVLVGSALGLFAYVT, AGELLIFCAAMAGAGLAFLWF, VFMGDVGALALGGALGTIAVI, IVLGIMGGIFVVEALSVMAQV, and QVVVRFWIITMLLCLVGLSTL.

This sequence belongs to the glycosyltransferase 4 family. MraY subfamily. Mg(2+) is required as a cofactor.

It is found in the cell inner membrane. It catalyses the reaction UDP-N-acetyl-alpha-D-muramoyl-L-alanyl-gamma-D-glutamyl-meso-2,6-diaminopimeloyl-D-alanyl-D-alanine + di-trans,octa-cis-undecaprenyl phosphate = di-trans,octa-cis-undecaprenyl diphospho-N-acetyl-alpha-D-muramoyl-L-alanyl-D-glutamyl-meso-2,6-diaminopimeloyl-D-alanyl-D-alanine + UMP. It functions in the pathway cell wall biogenesis; peptidoglycan biosynthesis. Functionally, catalyzes the initial step of the lipid cycle reactions in the biosynthesis of the cell wall peptidoglycan: transfers peptidoglycan precursor phospho-MurNAc-pentapeptide from UDP-MurNAc-pentapeptide onto the lipid carrier undecaprenyl phosphate, yielding undecaprenyl-pyrophosphoryl-MurNAc-pentapeptide, known as lipid I. The chain is Phospho-N-acetylmuramoyl-pentapeptide-transferase from Leptothrix cholodnii (strain ATCC 51168 / LMG 8142 / SP-6) (Leptothrix discophora (strain SP-6)).